Reading from the N-terminus, the 734-residue chain is METSSVLTRGAARQRSPAAPEKQARDQTERRPGRRRQGRRINEDQEEEAVFREVVSFTPDPLPARYYDKDTTRPISFYLSTLEELLAWTPLMEDGFNVALEPLVCRRPPLSSPRPRTLLCHDMMGGYLEDRFIQGSEVQNPYSFYHWQYIDIFVYFSHHTVTIPPVCWTNAAHRHGVCVLGTFITEWQEGGRLCEAFLAGDEPSFQAVADRLVQIAQFFRFDGWLINIENSLTPAAVRNTPLFLQYLTAQLHQQVPGGLVLWYDSVVQSGQLKWQDELNDQNRVFFDSCDGFFTNYNWREDHLQRMVAQAGERLADVYVGVDVFARSNVVGGRFDTDKSLELIRKHGFSAALFAPGWVYECLEKSDFFQNQDKFWSLLERFLPTHSICSLPFVTSFCLGLGTRRVCYGKEQAVGPWYHPSAQETQPLFGEHKLAGDSRGWVKTHCCLTDAWHGGSSLLLRGLIPPEVDSVAVRLFSLHIPVPPKVFLSMVYKFEGSTDVQVALELTTGDASSCHVGGMLVLNETGSRHSPRPLRVPPTRLARWASSCGQQLSGGWIQRCYEVNLRGCLLQDLLVSFSRPPGSREEESFICRLGEIQVVDASSLLAPLPRVQNVTISQIRWLPLITGSEGLPTRLLLSCTLHWSYLLLRARCFRIHCWKRTGSSSSVAESPETEKPTFLGLAFANQYRVVDLAVEAAGFGQDGRVEFLVEPVPREGFLVPQAEWGKAVLLFSVPQ.

The residue at position 1 (M1) is an N-acetylmethionine. The tract at residues 1–45 is disordered; it reads METSSVLTRGAARQRSPAAPEKQARDQTERRPGRRRQGRRINEDQ. Residues 22 to 31 are compositionally biased toward basic and acidic residues; sequence KQARDQTERR. One can recognise a BRCT domain in the interval 281 to 375; the sequence is QNRVFFDSCD…DFFQNQDKFW (95 aa).

Belongs to the glycosyl hydrolase 85 family.

The protein resides in the cytoplasm. It localises to the cytosol. It catalyses the reaction an N(4)-(oligosaccharide-(1-&gt;3)-[oligosaccharide-(1-&gt;6)]-beta-D-Man-(1-&gt;4)-beta-D-GlcNAc-(1-&gt;4)-alpha-D-GlcNAc)-L-asparaginyl-[protein] + H2O = an oligosaccharide-(1-&gt;3)-[oligosaccharide-(1-&gt;6)]-beta-D-Man-(1-&gt;4)-D-GlcNAc + N(4)-(N-acetyl-beta-D-glucosaminyl)-L-asparaginyl-[protein]. Endoglycosidase that releases N-glycans from glycoproteins by cleaving the beta-1,4-glycosidic bond in the N,N'-diacetylchitobiose core. Involved in the processing of free oligosaccharides in the cytosol. This chain is Cytosolic endo-beta-N-acetylglucosaminidase (Engase), found in Mus musculus (Mouse).